A 295-amino-acid polypeptide reads, in one-letter code: Pyridoxal 5'-phosphate synthase subunit PdxS (295 aa).

Residue Asp-25 participates in D-ribose 5-phosphate binding. Residue Lys-82 is the Schiff-base intermediate with D-ribose 5-phosphate of the active site. D-ribose 5-phosphate is bound at residue Gly-154. Arg-166 is a D-glyceraldehyde 3-phosphate binding site. D-ribose 5-phosphate contacts are provided by residues Gly-215 and 236–237; that span reads GS.

Belongs to the PdxS/SNZ family. As to quaternary structure, in the presence of PdxT, forms a dodecamer of heterodimers.

It catalyses the reaction aldehydo-D-ribose 5-phosphate + D-glyceraldehyde 3-phosphate + L-glutamine = pyridoxal 5'-phosphate + L-glutamate + phosphate + 3 H2O + H(+). It participates in cofactor biosynthesis; pyridoxal 5'-phosphate biosynthesis. Functionally, catalyzes the formation of pyridoxal 5'-phosphate from ribose 5-phosphate (RBP), glyceraldehyde 3-phosphate (G3P) and ammonia. The ammonia is provided by the PdxT subunit. Can also use ribulose 5-phosphate and dihydroxyacetone phosphate as substrates, resulting from enzyme-catalyzed isomerization of RBP and G3P, respectively. This is Pyridoxal 5'-phosphate synthase subunit PdxS from Staphylococcus carnosus (strain TM300).